The following is a 638-amino-acid chain: DNA repair protein rhp41 (638 aa).

The protein belongs to the XPC family.

The protein resides in the nucleus. In terms of biological role, has a role in the nucleotide excision repair (NER) pathway. Acts in both transcription-coupled repair (TCR) which removes damage from the transcribed strand of active genes and in global genome repair (GGR) which removes damage in untranscribed DNA. Involved in the repair of UV-induced damages where it is involved in the removal of cyclobutane pyrimidine dimers (CPDs). This chain is DNA repair protein rhp41 (rhp41), found in Schizosaccharomyces pombe (strain 972 / ATCC 24843) (Fission yeast).